A 431-amino-acid polypeptide reads, in one-letter code: Pheromone alpha factor receptor (431 aa).

At 1 to 49 (MSDAAPSLSNLFYDPTYNPGQSTINYTSIYGNGSTITFDELQGLVNSTV) the chain is on the extracellular side. N-linked (GlcNAc...) asparagine glycans are attached at residues asparagine 25 and asparagine 32. The helical transmembrane segment at 50–72 (TQAIMFGVRCGAAALTLIVMWMT) threads the bilayer. A Glycine zipper motif motif is present at residues 53–61 (IMFGVRCGA). Topologically, residues 73 to 78 (SRSRKT) are cytoplasmic. Residues 79 to 102 (PIFIINQVSLFLIILHSALYFKYL) form a helical membrane-spanning segment. Over 103–132 (LSNYSSVTYALTGFPQFISRGDVHVYGATN) the chain is Extracellular. A helical transmembrane segment spans residues 133–156 (IIQVLLVASIETSLVFQIKVIFTG). At 157–163 (DNFKRIG) the chain is on the cytoplasmic side. The helical transmembrane segment at 164 to 188 (LMLTSISFTLGIATVTMYFVSAVKG) threads the bilayer. Over 189 to 205 (MIVTYNDVSATQDKYFN) the chain is Extracellular. The chain crosses the membrane as a helical span at residues 206-230 (ASTILLASSINFMSFVLVVKLILAI). At 231-241 (RSRRFLGLKQF) the chain is on the cytoplasmic side. The chain crosses the membrane as a helical span at residues 242–266 (DSFHILLIMSCQSLLVPSIIFILAY). Over 267–275 (SLKPNQGTD) the chain is Extracellular. Residues 276–299 (VLTTVATLLAVLSLPLSSMWATAA) form a helical membrane-spanning segment. Residues 300-431 (NNASKTNTIT…KFWTEDNNNL (132 aa)) lie on the Cytoplasmic side of the membrane. A phosphoserine mark is found at serine 310 and serine 315. A Phosphothreonine modification is found at threonine 329. Position 331 is a phosphoserine (serine 331). Residue lysine 337 forms a Glycyl lysine isopeptide (Lys-Gly) (interchain with G-Cter in ubiquitin) linkage. Serine 360 bears the Phosphoserine mark. At threonine 363 the chain carries Phosphothreonine. Serine 366 bears the Phosphoserine mark. Lysine 374 participates in a covalent cross-link: Glycyl lysine isopeptide (Lys-Gly) (interchain with G-Cter in ubiquitin). The span at 379-389 (QLPTPTSSKNT) shows a compositional bias: polar residues. Positions 379-406 (QLPTPTSSKNTRIGPFADASYKEGEVEP) are disordered. At threonine 382 the chain carries Phosphothreonine. Residues serine 385 and serine 386 each carry the phosphoserine modification. Lysine 400 is covalently cross-linked (Glycyl lysine isopeptide (Lys-Gly) (interchain with G-Cter in ubiquitin)). 2 positions are modified to phosphothreonine: threonine 411 and threonine 414. Lysine 422 is covalently cross-linked (Glycyl lysine isopeptide (Lys-Gly) (interchain with G-Cter in ubiquitin)).

Belongs to the G-protein coupled receptor 4 family. Homodimer. Might also for higher order homooligomers such as homotetramers. Oligomerization is mediated significantly by transmembrane domain 1 (TMD1), possibly in concert with the N-terminal extracellular domain and TMD2. Interaction with GPA1, its dedicated G-alpha protein. Undergoes hyperphosphorylation of the C-terminal cytoplasmic domain after binding of the alpha-factor, which leads to internalization by endocytosis. In terms of processing, monoubiquitination at Lys-337 triggers internalization of STE2. Post-translationally, N-glycosylated. N-glycosylation may be involved in the sorting process for misfolded STE2 protein. As to expression, expressed in MATa strains but not in MATalpha strains.

It is found in the cell membrane. Fungal class D1 G-protein-coupled receptor that acts as an alpha-factor pheromone receptor performing pheromone-dependent signal transduction involved in cellular conjugation, mating projection assembly, and in cell fusion. Following alpha-factor-binding, the signal is transmitted via a tripartite G protein consisting of alpha-, beta- and gamma-subunits (GAP1, STE4 and STE8 respectively) that prepares the cell for conjugation. In the inactive state, the cytoplasmic end of transmembrane domain 7 (TMD7) is unstructured and packs between TMD1-6, blocking the G protein coupling site. Agonist binding results in the outward movement of the extracellular ends of TMD6 and TMD7 by 6 Angstroms. On the intracellular surface, the G protein coupling site is formed by a 20 Angstroms outward movement of the unstructured region in TMD7 that unblocks the site, and a 12 Angstroms inward movement of TMD6. This Saccharomyces cerevisiae (strain ATCC 204508 / S288c) (Baker's yeast) protein is Pheromone alpha factor receptor (STE2).